A 92-amino-acid chain; its full sequence is Arrestin-C (92 aa).

This sequence belongs to the arrestin family. Homodimer; disulfide-linked in response to retinal illumination. Interacts with CXCR4; the interaction is dependent on the C-terminal phosphorylation of CXCR4 and modulates the calcium ion mobilization activity of CXCR4. Interacts with GPR84. Retina and pineal gland.

It is found in the photoreceptor inner segment. It localises to the cell projection. The protein localises to the cilium. Its subcellular location is the photoreceptor outer segment. In terms of biological role, may play a role in an as yet undefined retina-specific signal transduction. Could bind to photoactivated-phosphorylated red/green opsins. In Rattus norvegicus (Rat), this protein is Arrestin-C (Arr3).